A 287-amino-acid polypeptide reads, in one-letter code: Oxaloacetate decarboxylase (287 aa).

Serine 50 lines the substrate pocket. Aspartate 88 is a binding site for Mg(2+). Substrate-binding residues include arginine 159 and histidine 235.

It belongs to the isocitrate lyase family. Oxaloacetate decarboxylase subfamily. In terms of assembly, homotetramer; dimer of dimers. Requires Mg(2+) as cofactor.

The enzyme catalyses oxaloacetate + H(+) = pyruvate + CO2. In terms of biological role, catalyzes the decarboxylation of oxaloacetate into pyruvate. Seems to play a role in maintaining cellular concentrations of bicarbonate and pyruvate. This Pseudomonas aeruginosa (strain LESB58) protein is Oxaloacetate decarboxylase.